Consider the following 361-residue polypeptide: Uroporphyrinogen decarboxylase (361 aa).

Substrate contacts are provided by residues 27 to 31, D77, Y154, T209, and H327; that span reads RQAGR.

The protein belongs to the uroporphyrinogen decarboxylase family. As to quaternary structure, homodimer.

The protein localises to the cytoplasm. The catalysed reaction is uroporphyrinogen III + 4 H(+) = coproporphyrinogen III + 4 CO2. The protein operates within porphyrin-containing compound metabolism; protoporphyrin-IX biosynthesis; coproporphyrinogen-III from 5-aminolevulinate: step 4/4. In terms of biological role, catalyzes the decarboxylation of four acetate groups of uroporphyrinogen-III to yield coproporphyrinogen-III. This Coxiella burnetii (strain RSA 331 / Henzerling II) protein is Uroporphyrinogen decarboxylase.